The primary structure comprises 343 residues: MAKRQLNRRQNWRIEKIQGERAARAAKRESSAVEALEGGDLGPEQHGLVIAHFGVQVEVEAVDGELAGQVFRCHLRANLPALVTGDQVVWRAGNQGIGVIVAQLPRTTELCRPDSRGQLKPVAANVDMIVIVFAPLPEPHANLIDRYLVAAEHAGIRPLLLLNKFDLIDEQNAPALNALLAVYRTLGYPVLEVSAHHGNGMEQLQKQLDGRISVFVGQSGVGKSSLVNSLLPEVETRVGPLSELSGQGTHTTTTARLFHFPGGGELIDSPGIREFGLGHVSRADVEAGFIEFNDLLGTCRFRDCKHDREPGCALLKALEDGRVQQQRMNSYRSIIASLPENGY.

In terms of domain architecture, CP-type G spans 116 to 275 (RGQLKPVAAN…LIDSPGIREF (160 aa)). GTP is bound by residues 163–166 (NKFD) and 217–225 (GQSGVGKSS). The Zn(2+) site is built by Cys299, Cys304, His306, and Cys312.

This sequence belongs to the TRAFAC class YlqF/YawG GTPase family. RsgA subfamily. As to quaternary structure, monomer. Associates with 30S ribosomal subunit, binds 16S rRNA. Zn(2+) serves as cofactor.

The protein resides in the cytoplasm. In terms of biological role, one of several proteins that assist in the late maturation steps of the functional core of the 30S ribosomal subunit. Helps release RbfA from mature subunits. May play a role in the assembly of ribosomal proteins into the subunit. Circularly permuted GTPase that catalyzes slow GTP hydrolysis, GTPase activity is stimulated by the 30S ribosomal subunit. The chain is Small ribosomal subunit biogenesis GTPase RsgA from Pseudomonas fluorescens (strain Pf0-1).